Reading from the N-terminus, the 191-residue chain is MAERDNNRRGNRRDRDEAPEFADRLVAINRVSKTVKGGKRFGFAALVVVGDQKGRVGFGKGKAKEVPEAIRKATEQAKRQMIRVQLREGRTLHHDMEGRHGAGKVVMRSAPEGTGIIAGGPMRAVFEMLGVKDVVSKSIGSQNPYNMIRATMDGLRKESSPRSVAQRRGKKVADILPKVDAAPAPAETAEA.

The 64-residue stretch at 21 to 84 (FADRLVAINR…EQAKRQMIRV (64 aa)) folds into the S5 DRBM domain. A disordered region spans residues 155–191 (LRKESSPRSVAQRRGKKVADILPKVDAAPAPAETAEA). Positions 181–191 (AAPAPAETAEA) are enriched in low complexity.

It belongs to the universal ribosomal protein uS5 family. Part of the 30S ribosomal subunit. Contacts proteins S4 and S8.

Functionally, with S4 and S12 plays an important role in translational accuracy. Its function is as follows. Located at the back of the 30S subunit body where it stabilizes the conformation of the head with respect to the body. The polypeptide is Small ribosomal subunit protein uS5 (Roseobacter denitrificans (strain ATCC 33942 / OCh 114) (Erythrobacter sp. (strain OCh 114))).